Reading from the N-terminus, the 396-residue chain is Alpha-1-antitrypsin (396 aa).

Positions 1-2 are cleaved as a signal peptide; it reads HV. The segment at 1–24 is disordered; it reads HVEDPQGDAAQKTDTSHHDQEHST. The span at 14 to 24 shows a compositional bias: basic and acidic residues; it reads DTSHHDQEHST. Position 16 is a phosphoserine (S16). N-linked (GlcNAc...) asparagine glycans are attached at residues N48, N85, N123, and N249. Residues 351–370 are RCL; it reads GAMFLEAIPMSIPPEVKFNK. S361 carries the post-translational modification Phosphoserine.

It belongs to the serpin family. As to quaternary structure, interacts with CELA2A. Interacts with ERGIC3 and LMAN1/ERGIC53. Interacts with PRSS1/Trypsin. Plasma.

The protein localises to the secreted. Its function is as follows. Inhibitor of serine proteases. Its primary target is elastase, but it also has a moderate affinity for plasmin and thrombin. Inhibits trypsin, chymotrypsin and plasminogen activator. The polypeptide is Alpha-1-antitrypsin (SERPINA1) (Chlorocebus aethiops (Green monkey)).